Consider the following 812-residue polypeptide: Ribonucleoside-diphosphate reductase large subunit (812 aa).

The ATP-cone domain maps to 12–103 (LYVIKRDGRQ…VSNLHKETKK (92 aa)). ATP is bound by residues 16 to 17 (KR), 22 to 28 (EEVHFDK), T64, and D68. GDP is bound by residues S213 and S228. The cysteines at positions 229 and 455 are disulfide-linked. DTTP is bound by residues 237 to 239 (DSI), K254, R267, and 274 to 275 (CG). GDP is bound at residue N438. N438 serves as the catalytic Proton acceptor. The Cysteine radical intermediate role is filled by C440. GDP-binding positions include E442 and 615–618 (TAST). The Proton acceptor role is filled by E442. Position 778 is a phosphothreonine (T778). Position 782 is a phosphoserine (S782). Residue Y786 is modified to Phosphotyrosine.

Belongs to the ribonucleoside diphosphate reductase large chain family. Heterodimer of a large and a small subunit.

The catalysed reaction is a 2'-deoxyribonucleoside 5'-diphosphate + [thioredoxin]-disulfide + H2O = a ribonucleoside 5'-diphosphate + [thioredoxin]-dithiol. Under complex allosteric control mediated by deoxynucleoside triphosphates and ATP binding to separate specificity and activation sites on the M1 subunit. The type of nucleotide bound at the specificity site determines substrate preference. It seems probable that ATP makes the enzyme reduce CDP and UDP, dGTP favors ADP reduction and dTTP favors GDP reduction. Stimulated by ATP and inhibited by dATP binding to the activity site. Functionally, provides the precursors necessary for DNA synthesis. Catalyzes the biosynthesis of deoxyribonucleotides from the corresponding ribonucleotides. This Drosophila melanogaster (Fruit fly) protein is Ribonucleoside-diphosphate reductase large subunit (RnrL).